The primary structure comprises 938 residues: ATP-dependent RNA helicase DDX42 (938 aa).

Over residues 1–18 (MNWNKGGPGTKRGFGFGG) the composition is skewed to gly residues. The interval 1–114 (MNWNKGGPGT…KPVDSDSDDD (114 aa)) is disordered. Lys-5 bears the N6-acetyllysine mark. Residue Arg-12 is modified to Omega-N-methylarginine. Residues 35-52 (SHSAFGATSSSSGFGKSA) are compositionally biased toward low complexity. Ser-58 carries the post-translational modification Phosphoserine. Positions 70–84 (DEENAYFEDEEEDSS) are enriched in acidic residues. 4 positions are modified to phosphoserine: Ser-96, Ser-104, Ser-109, and Ser-111. Residues 116-157 (LEAFMAEVEDQAARDMKRLEEKDKERKNVKGIRDDIEEEDDQ) are a coiled coil. A disordered region spans residues 182-203 (EYDSDGNPIAPTKKIIDPLPPI). Ser-185 is modified (phosphoserine). Positions 253–281 (SSFAHFGFDEQLMHQIRKSEYTQPTPIQC) match the Q motif motif. The 176-residue stretch at 284 to 459 (VPVALSGRDM…RDILIDPIRV (176 aa)) folds into the Helicase ATP-binding domain. 297-304 (AKTGSGKT) lines the ATP pocket. The DEAD box motif lies at 407–410 (DEAD). The region spanning 487–632 (WLTRRLVEFT…HVSKELLDLA (146 aa)) is the Helicase C-terminal domain. Composition is skewed to polar residues over residues 737-757 (LNSV…SPVT) and 786-798 (GVNN…NSRE). The interval 737 to 938 (LNSVPTNSAQ…PKRKKSRWDS (202 aa)) is disordered. Residues 738–833 (NSVPTNSAQQ…TGNRHSDSPR (96 aa)) form a necessary for interaction with TP53BP2 region. Ser-754 is modified (phosphoserine). Positions 820 to 920 (SHGETGNRHS…KVDSKTDKTA (101 aa)) are enriched in basic and acidic residues. Lys-899 is covalently cross-linked (Glycyl lysine isopeptide (Lys-Gly) (interchain with G-Cter in SUMO2)).

It belongs to the DEAD box helicase family. DDX42 subfamily. Transient component of the SF3B subcomplex of the 17S U2 SnRNP complex. Interacts (via the C-terminus) with TP53BP2; the interaction is not inhibitied by TP53BP2 ubiquitination and is independent of p53/TP53. Expressed in several cell lines (at protein level). Expressed in liver, lung, tonsil, thymus, muscle and pancreatic islets.

It localises to the cytoplasm. The protein localises to the nucleus. Its subcellular location is the cajal body. It is found in the nucleus speckle. It catalyses the reaction ATP + H2O = ADP + phosphate + H(+). Its function is as follows. ATP-dependent RNA helicase that binds to partially double-stranded RNAs (dsRNAs) in order to unwind RNA secondary structures. Unwinding is promoted in the presence of single-strand binding proteins. Also mediates RNA duplex formation thereby displacing the single-strand RNA binding protein. ATP and ADP modulate its activity: ATP binding and hydrolysis by DDX42 triggers RNA strand separation, whereas the ADP-bound form of the protein triggers annealing of complementary RNA strands. Required for assembly of the 17S U2 SnRNP complex of the spliceosome, a large ribonucleoprotein complex that removes introns from transcribed pre-mRNAs: DDX42 associates transiently with the SF3B subcomplex of the 17S U2 SnRNP complex and is released after fulfilling its role in the assembly of 17S U2 SnRNP. Involved in the survival of cells by interacting with TP53BP2 and thereby counteracting the apoptosis-stimulating activity of TP53BP2. Relocalizes TP53BP2 to the cytoplasm. This is ATP-dependent RNA helicase DDX42 from Homo sapiens (Human).